Consider the following 369-residue polypeptide: tRNA(Met) cytidine acetate ligase (369 aa).

ATP contacts are provided by residues 7–20 (VAEF…HKYL), G96, N152, and R175.

It belongs to the TmcAL family.

The protein localises to the cytoplasm. The catalysed reaction is cytidine(34) in elongator tRNA(Met) + acetate + ATP = N(4)-acetylcytidine(34) in elongator tRNA(Met) + AMP + diphosphate. Catalyzes the formation of N(4)-acetylcytidine (ac(4)C) at the wobble position of elongator tRNA(Met), using acetate and ATP as substrates. First activates an acetate ion to form acetyladenylate (Ac-AMP) and then transfers the acetyl group to tRNA to form ac(4)C34. This chain is tRNA(Met) cytidine acetate ligase, found in Streptococcus agalactiae serotype Ia (strain ATCC 27591 / A909 / CDC SS700).